Consider the following 821-residue polypeptide: High affinity potassium transporter (821 aa).

Residues methionine 1–asparagine 10 show a composition bias toward polar residues. Residues methionine 1–methionine 47 are disordered. Topologically, residues methionine 1–glutamine 57 are cytoplasmic. Residues asparagine 17–asparagine 27 are compositionally biased toward low complexity. Residues valine 58–leucine 78 form a helical membrane-spanning segment. Residues tyrosine 79–serine 101 are Extracellular-facing. Residues isoleucine 102–leucine 122 traverse the membrane as a helical segment. The Cytoplasmic portion of the chain corresponds to glycine 123–lysine 190. Residues leucine 191–methionine 211 traverse the membrane as a helical segment. The Extracellular portion of the chain corresponds to serine 212–aspartate 238. The helical transmembrane segment at valine 239–asparagine 259 threads the bilayer. Position 260 (lysine 260) is a topological domain, cytoplasmic. Residues isoleucine 261–isoleucine 281 form a helical membrane-spanning segment. The Extracellular portion of the chain corresponds to tyrosine 282–histidine 306. The chain crosses the membrane as a helical span at residues serine 307–alanine 327. Over aspartate 328–threonine 340 the chain is Cytoplasmic. Residues leucine 341–isoleucine 361 traverse the membrane as a helical segment. Topologically, residues lysine 362–valine 386 are extracellular. Residues methionine 387–phenylalanine 407 traverse the membrane as a helical segment. Topologically, residues serine 408 to lysine 434 are cytoplasmic. A helical transmembrane segment spans residues valine 435 to phenylalanine 455. Residues lysine 456–alanine 463 are Extracellular-facing. N-linked (GlcNAc...) asparagine glycosylation is present at asparagine 460. A helical transmembrane segment spans residues alanine 464–methionine 484. Residues threonine 485–asparagine 491 are Cytoplasmic-facing. A helical membrane pass occupies residues isoleucine 492–serine 512. Topologically, residues asparagine 513–lysine 516 are extracellular. A helical membrane pass occupies residues isoleucine 517–phenylalanine 537. Residues tryptophan 538–isoleucine 821 lie on the Cytoplasmic side of the membrane.

The protein belongs to the HAK/KUP transporter (TC 2.A.72) family.

It is found in the membrane. Functionally, major high-affinity potassium uptake protein. This Schwanniomyces occidentalis (Yeast) protein is High affinity potassium transporter (HAK1).